The chain runs to 214 residues: Urease accessory protein UreG 2 (214 aa).

Residue 22 to 29 (GPVGSGKT) participates in GTP binding.

Belongs to the SIMIBI class G3E GTPase family. UreG subfamily. In terms of assembly, homodimer. UreD, UreF and UreG form a complex that acts as a GTP-hydrolysis-dependent molecular chaperone, activating the urease apoprotein by helping to assemble the nickel containing metallocenter of UreC. The UreE protein probably delivers the nickel.

Its subcellular location is the cytoplasm. Functionally, facilitates the functional incorporation of the urease nickel metallocenter. This process requires GTP hydrolysis, probably effectuated by UreG. This Bradyrhizobium sp. (strain BTAi1 / ATCC BAA-1182) protein is Urease accessory protein UreG 2.